A 418-amino-acid chain; its full sequence is Tyrosine--tRNA ligase (418 aa).

Tyrosine 39 lines the L-tyrosine pocket. Residues 44 to 53 (CTAASLHVGH) carry the 'HIGH' region motif. The L-tyrosine site is built by tyrosine 176 and glutamine 180. Positions 236-240 (KMGKT) match the 'KMSKS' region motif. Lysine 239 is an ATP binding site. Residues 350–418 (IGVLVAFAEK…KKKHVLLRLA (69 aa)) form the S4 RNA-binding domain.

The protein belongs to the class-I aminoacyl-tRNA synthetase family. TyrS type 1 subfamily. In terms of assembly, homodimer.

The protein localises to the cytoplasm. The enzyme catalyses tRNA(Tyr) + L-tyrosine + ATP = L-tyrosyl-tRNA(Tyr) + AMP + diphosphate + H(+). Functionally, catalyzes the attachment of tyrosine to tRNA(Tyr) in a two-step reaction: tyrosine is first activated by ATP to form Tyr-AMP and then transferred to the acceptor end of tRNA(Tyr). This chain is Tyrosine--tRNA ligase, found in Rhodopseudomonas palustris (strain ATCC BAA-98 / CGA009).